The primary structure comprises 72 residues: Putative snRNP Sm-like protein (72 aa).

A Sm domain is found at 4–72 (RPLDILNNAL…RGDNVVYVSP (69 aa)).

Belongs to the snRNP Sm proteins family.

The sequence is that of Putative snRNP Sm-like protein from Methanosarcina acetivorans (strain ATCC 35395 / DSM 2834 / JCM 12185 / C2A).